A 346-amino-acid polypeptide reads, in one-letter code: Histidinol-phosphate aminotransferase (346 aa).

The residue at position 206 (Lys206) is an N6-(pyridoxal phosphate)lysine.

This sequence belongs to the class-II pyridoxal-phosphate-dependent aminotransferase family. Histidinol-phosphate aminotransferase subfamily. Homodimer. It depends on pyridoxal 5'-phosphate as a cofactor.

The catalysed reaction is L-histidinol phosphate + 2-oxoglutarate = 3-(imidazol-4-yl)-2-oxopropyl phosphate + L-glutamate. It participates in amino-acid biosynthesis; L-histidine biosynthesis; L-histidine from 5-phospho-alpha-D-ribose 1-diphosphate: step 7/9. This is Histidinol-phosphate aminotransferase from Bacteroides thetaiotaomicron (strain ATCC 29148 / DSM 2079 / JCM 5827 / CCUG 10774 / NCTC 10582 / VPI-5482 / E50).